The following is an 85-amino-acid chain: UPF0291 protein SPCG_1462 (85 aa).

Positions 62-85 are disordered; it reads TPEKLRQVQREKGLHGRSLDDPNS.

This sequence belongs to the UPF0291 family.

It is found in the cytoplasm. The polypeptide is UPF0291 protein SPCG_1462 (Streptococcus pneumoniae (strain CGSP14)).